We begin with the raw amino-acid sequence, 401 residues long: MRIPEDVRKDIPLTQEVIYFDNTATSLTPKPVIEAMDEYYLRYRANVHRGVHRLSQMATQKYEESRKVVADFINAEFDEIAFTKNTSESLNLVALGLEHLFKKGDKIVTTPYEHHSNLLPWQRLAKKKGLKLEFIEGDDEGNLDLADAEKKIKGAKLVAVQHVSNALGVIHEVEELGKMVKEEGAIFVVDAAQSVGHMEVDVKKLKADFLAFSGHKGPMGPTGIGVLYINKEFFDVFEPPLIGGGTIEDVELCCYKLTEPPERFEAGTPNIGGAIGLAAGIKYIEKIGIDKIEKQERKLVKRTTEGLDELEIPWYGPRNLDKHAGVVSFNVPPLHPHDVASVLDEHKIMVRSGHHCALPVMKRLKINGTVRASFHVYNSLEEVETFLGVLEELVKSLRSSQ.

At Lys-216 the chain carries N6-(pyridoxal phosphate)lysine.

It belongs to the class-V pyridoxal-phosphate-dependent aminotransferase family. Csd subfamily. The cofactor is pyridoxal 5'-phosphate.

It catalyses the reaction (sulfur carrier)-H + L-cysteine = (sulfur carrier)-SH + L-alanine. This Pyrococcus abyssi (strain GE5 / Orsay) protein is Probable cysteine desulfurase (csd).